Here is a 67-residue protein sequence, read N- to C-terminus: Small ribosomal subunit protein bS21 (67 aa).

It belongs to the bacterial ribosomal protein bS21 family.

This is Small ribosomal subunit protein bS21 from Nitratidesulfovibrio vulgaris (strain DSM 19637 / Miyazaki F) (Desulfovibrio vulgaris).